The sequence spans 223 residues: UPF0319 protein VPA1584 (223 aa).

A signal peptide spans 1-21 (MKLIKPLTCALALAMSGMAFA).

Belongs to the UPF0319 family.

This Vibrio parahaemolyticus serotype O3:K6 (strain RIMD 2210633) protein is UPF0319 protein VPA1584.